A 162-amino-acid chain; its full sequence is MVKKKSANASASIARNKRATFEYRIEDKIEAGLQLMGWEVKSIRMGKVNLSDCYVYIKEGEAFMHGCTIQPLNTASTHVICDPIRTKKLLLKRSEIDKLAGLIERQGYTLVPLSMYWRKGAWVKVEIGLGKGKKDHDKREDTKEREWKIEKARVMKKDKENA.

This sequence belongs to the SmpB family.

The protein localises to the cytoplasm. Functionally, required for rescue of stalled ribosomes mediated by trans-translation. Binds to transfer-messenger RNA (tmRNA), required for stable association of tmRNA with ribosomes. tmRNA and SmpB together mimic tRNA shape, replacing the anticodon stem-loop with SmpB. tmRNA is encoded by the ssrA gene; the 2 termini fold to resemble tRNA(Ala) and it encodes a 'tag peptide', a short internal open reading frame. During trans-translation Ala-aminoacylated tmRNA acts like a tRNA, entering the A-site of stalled ribosomes, displacing the stalled mRNA. The ribosome then switches to translate the ORF on the tmRNA; the nascent peptide is terminated with the 'tag peptide' encoded by the tmRNA and targeted for degradation. The ribosome is freed to recommence translation, which seems to be the essential function of trans-translation. The protein is SsrA-binding protein of Shewanella frigidimarina (strain NCIMB 400).